The following is a 504-amino-acid chain: ATP synthase subunit alpha 2 (504 aa).

ATP is bound at residue 169–176 (GDRQTGKT).

It belongs to the ATPase alpha/beta chains family. In terms of assembly, F-type ATPases have 2 components, CF(1) - the catalytic core - and CF(0) - the membrane proton channel. CF(1) has five subunits: alpha(3), beta(3), gamma(1), delta(1), epsilon(1). CF(0) has three main subunits: a(1), b(2) and c(9-12). The alpha and beta chains form an alternating ring which encloses part of the gamma chain. CF(1) is attached to CF(0) by a central stalk formed by the gamma and epsilon chains, while a peripheral stalk is formed by the delta and b chains.

The protein localises to the cell membrane. It catalyses the reaction ATP + H2O + 4 H(+)(in) = ADP + phosphate + 5 H(+)(out). In terms of biological role, produces ATP from ADP in the presence of a proton gradient across the membrane. The alpha chain is a regulatory subunit. In Listeria monocytogenes serovar 1/2a (strain ATCC BAA-679 / EGD-e), this protein is ATP synthase subunit alpha 2.